The chain runs to 514 residues: 2,3-bisphosphoglycerate-independent phosphoglycerate mutase (514 aa).

Residues Asp14 and Ser64 each contribute to the Mn(2+) site. Ser64 serves as the catalytic Phosphoserine intermediate. Substrate is bound by residues His125, 155-156 (RD), Arg187, Arg193, 263-266 (RADR), and Lys336. Asp403, His407, Asp444, His445, and His463 together coordinate Mn(2+).

Belongs to the BPG-independent phosphoglycerate mutase family. As to quaternary structure, monomer. Mn(2+) serves as cofactor.

It catalyses the reaction (2R)-2-phosphoglycerate = (2R)-3-phosphoglycerate. Its pathway is carbohydrate degradation; glycolysis; pyruvate from D-glyceraldehyde 3-phosphate: step 3/5. Catalyzes the interconversion of 2-phosphoglycerate and 3-phosphoglycerate. In Shigella dysenteriae serotype 1 (strain Sd197), this protein is 2,3-bisphosphoglycerate-independent phosphoglycerate mutase.